We begin with the raw amino-acid sequence, 349 residues long: MATQTLPAQMTALYYEKPRDFSIIKADVPLIDHDEVLLKVSMCGVCGTDQHIHEGEFIAKFPLIPGHEVIGTIVLAGNQVENVKVGDRVVCDVSETCHKCFFCQRGTPLFCESFEAHGVTLNGGFAEYAKFRAAKVFPIKNLTDEQATLVEPASCAVHGLDKIRPKPGSECLLIGAGPTGLMLAQLLKLNGAQRVVLAANKGMKMDIARKINAADEYIDLDRKDAANQWAQLKEDNPHGFDVVVEATGVESIVNDSINYVRRGGTLLVYGVYDNAARVTWSPTKIFQDEINIVGSFAQIHCFPRAVAYLESGKIRTDGMVTHVYKIEEYQEALDKMASRQCLKIAVKPN.

The Zn(2+) site is built by Cys-46, His-67, Cys-97, Cys-100, Cys-103, Cys-111, and Glu-151.

The protein belongs to the zinc-containing alcohol dehydrogenase family. Zn(2+) is required as a cofactor.

The protein localises to the cell projection. The catalysed reaction is D-arabinitol + NADP(+) = D-xylulose + NADPH + H(+). The enzyme catalyses D-arabinitol + NADP(+) = D-ribulose + NADPH + H(+). In terms of biological role, D-arabinitol dehydrogenase which mostly produces D-arabinitol in haustoria, the appendages of the parasitic fungus that penetrate the host's tissue and draws nutrients from it. D-arabinitol accumulation may serve as a carbohydrate storage compound. D-arabinitol is also capable of quenching reactive oxygen species involved in host plant defense reactions, thus providing protection for the rust fungus during the pathogenic interaction. In Uromyces fabae (Rust fungus), this protein is D-arabinitol dehydrogenase 1 (ARD1).